The primary structure comprises 252 residues: Imidazole glycerol phosphate synthase subunit HisF (252 aa).

Residues Asp11 and Asp130 contribute to the active site.

Belongs to the HisA/HisF family. As to quaternary structure, heterodimer of HisH and HisF.

It localises to the cytoplasm. The enzyme catalyses 5-[(5-phospho-1-deoxy-D-ribulos-1-ylimino)methylamino]-1-(5-phospho-beta-D-ribosyl)imidazole-4-carboxamide + L-glutamine = D-erythro-1-(imidazol-4-yl)glycerol 3-phosphate + 5-amino-1-(5-phospho-beta-D-ribosyl)imidazole-4-carboxamide + L-glutamate + H(+). It participates in amino-acid biosynthesis; L-histidine biosynthesis; L-histidine from 5-phospho-alpha-D-ribose 1-diphosphate: step 5/9. Its function is as follows. IGPS catalyzes the conversion of PRFAR and glutamine to IGP, AICAR and glutamate. The HisF subunit catalyzes the cyclization activity that produces IGP and AICAR from PRFAR using the ammonia provided by the HisH subunit. The sequence is that of Imidazole glycerol phosphate synthase subunit HisF from Thermococcus onnurineus (strain NA1).